A 194-amino-acid chain; its full sequence is Peptidyl-tRNA hydrolase (194 aa).

Tyr17 is a tRNA binding site. Catalysis depends on His22, which acts as the Proton acceptor. Tyr68, Asn70, and Asn116 together coordinate tRNA.

The protein belongs to the PTH family. Monomer.

The protein localises to the cytoplasm. The enzyme catalyses an N-acyl-L-alpha-aminoacyl-tRNA + H2O = an N-acyl-L-amino acid + a tRNA + H(+). Hydrolyzes ribosome-free peptidyl-tRNAs (with 1 or more amino acids incorporated), which drop off the ribosome during protein synthesis, or as a result of ribosome stalling. Functionally, catalyzes the release of premature peptidyl moieties from peptidyl-tRNA molecules trapped in stalled 50S ribosomal subunits, and thus maintains levels of free tRNAs and 50S ribosomes. This chain is Peptidyl-tRNA hydrolase, found in Pseudoalteromonas translucida (strain TAC 125).